A 237-amino-acid polypeptide reads, in one-letter code: Protein GrpE (237 aa).

Disordered stretches follow at residues 24–56 and 204–237; these read LILE…KQLQ and SAGS…PQPS.

It belongs to the GrpE family. Homodimer.

Its subcellular location is the cytoplasm. In terms of biological role, participates actively in the response to hyperosmotic and heat shock by preventing the aggregation of stress-denatured proteins, in association with DnaK and GrpE. It is the nucleotide exchange factor for DnaK and may function as a thermosensor. Unfolded proteins bind initially to DnaJ; upon interaction with the DnaJ-bound protein, DnaK hydrolyzes its bound ATP, resulting in the formation of a stable complex. GrpE releases ADP from DnaK; ATP binding to DnaK triggers the release of the substrate protein, thus completing the reaction cycle. Several rounds of ATP-dependent interactions between DnaJ, DnaK and GrpE are required for fully efficient folding. The protein is Protein GrpE of Synechococcus sp. (strain JA-2-3B'a(2-13)) (Cyanobacteria bacterium Yellowstone B-Prime).